The following is a 449-amino-acid chain: MAQFFKAKPNSSKQLSAKQSFSVHQLDHLGAGIAQHQGKVVFIPGALPNETVQAQLTEQKKNYARAKLIKVETPSAERVTPLCPHYQSCGGCDLQHMSLAGQREHKSAALVDIMAKFAGAEGNSVPALTGEGWHYRRRARLATLFDKNTKQLSLGFRASSSNQVVPIDSCLVLAKPLADLIAPFAKLLNQLAAKSSLGHVELIDADNGHFAVIRITKPLNDKDMAKLAQFAEQHQIHICLQDNNGEFHGVNGTLLLPVYQLLDDNADATPVSLTFTPGNFVQVNAQINKTMVAQALEWLAPQPGERILDLFCGMGNFSLPLAKLGAEVIGVEGVPEMVSQARENAAANGLSNLTFYHGDLSADLSCEPWMGKIDKLLLDPARAGAFESLQWLKKMKPRQVVYVSCNPASLARDSAVLLERGYKLQKLGLIDMFPQTHHIEAMALFELAK.

The region spanning 12–70 (SKQLSAKQSFSVHQLDHLGAGIAQHQGKVVFIPGALPNETVQAQLTEQKKNYARAKLIK) is the TRAM domain. Positions 83, 89, 92, and 170 each coordinate [4Fe-4S] cluster. Residues Gln-282, Phe-311, Asn-316, Glu-332, Asp-359, and Asp-379 each contribute to the S-adenosyl-L-methionine site. Cys-405 (nucleophile) is an active-site residue.

This sequence belongs to the class I-like SAM-binding methyltransferase superfamily. RNA M5U methyltransferase family. RlmD subfamily.

The enzyme catalyses uridine(1939) in 23S rRNA + S-adenosyl-L-methionine = 5-methyluridine(1939) in 23S rRNA + S-adenosyl-L-homocysteine + H(+). Its function is as follows. Catalyzes the formation of 5-methyl-uridine at position 1939 (m5U1939) in 23S rRNA. The chain is 23S rRNA (uracil(1939)-C(5))-methyltransferase RlmD from Shewanella sp. (strain ANA-3).